A 727-amino-acid polypeptide reads, in one-letter code: Putative ATP-dependent RNA helicase DHX15 (727 aa).

Positions 1–41 (MSKRKHESSDSNKKAMKKQQNKIEEEEEEITNTTTTTTTTN) are disordered. Residues 31 to 41 (TNTTTTTTTTN) are compositionally biased toward low complexity. Positions 87 to 251 (IKVIKENQVV…FENAPLIKVP (165 aa)) constitute a Helicase ATP-binding domain. 100–107 (GETGSGKT) lines the ATP pocket. The short motif at 198 to 201 (DEAH) is the DEAH box element. A Helicase C-terminal domain is found at 273-445 (AVRTVIDIHT…SVVLQLLKLG (173 aa)).

It belongs to the DEAD box helicase family. DEAH subfamily. DDX15/PRP43 sub-subfamily.

It localises to the nucleus. The enzyme catalyses ATP + H2O = ADP + phosphate + H(+). In terms of biological role, pre-mRNA processing factor involved in disassembly of spliceosomes after the release of mature mRNA. The polypeptide is Putative ATP-dependent RNA helicase DHX15 (dhx15) (Dictyostelium discoideum (Social amoeba)).